The following is a 244-amino-acid chain: Transcription factor Sox-12 (244 aa).

Residues 1-22 (MVQNKTTGSCPKPTEVAPGGPS) form a disordered region. Residues 31–99 (IKRPMNAFMV…KHMADYPNYK (69 aa)) constitute a DNA-binding region (HMG box). Disordered regions lie at residues 101-137 (RPRRRSRTQESKTRARLPRSTATCQSVPSPCLSQMDT) and 152-193 (GDQV…HEGL). 2 stretches are compositionally biased toward polar residues: residues 120-137 (STATCQSVPSPCLSQMDT) and 176-186 (HTKTVPSSPQS).

As to expression, expressed at a low level in embryos, and in the adult lung, ovary, skeletal muscle, testis, brain and heart.

The protein localises to the nucleus. In terms of biological role, transcription factor that binds to the sequence 5'-AACAAT-3'. Acts as a transcriptional activator. This chain is Transcription factor Sox-12 (sox12), found in Xenopus laevis (African clawed frog).